The chain runs to 199 residues: Tumor protein p53-inducible nuclear protein 2 (199 aa).

Positions 26–41 (VSEEDEVDGWLIIDLQ) match the LIR motif. Disordered regions lie at residues 41 to 69 (QDSYTAPPDPRASPAPAGRPPPAPSLMDE), 117 to 153 (LESGPPSPHPEAALPDQDLSDGELAPARREPRALHHA), and 173 to 199 (LQRARQRAERHTLSAKVLQRQNRARES). A compositionally biased stretch (pro residues) spans 47-64 (PPDPRASPAPAGRPPPAP). Position 136 is a phosphoserine (serine 136).

In terms of assembly, interacts with VMP1, GABARAP, GABARAPL1, GABARAPL2, MAP1LC3A, MAP1LC3B, MAP1LC3C and THRA. Abundantly expressed in skeletal muscle and heart and expression is highly repressed in muscle from obese diabetic rats.

Its subcellular location is the cytoplasm. It is found in the cytosol. The protein localises to the nucleus. The protein resides in the PML body. It localises to the cytoplasmic vesicle. Its subcellular location is the autophagosome. In terms of biological role, dual regulator of transcription and autophagy. Positively regulates autophagy and is required for autophagosome formation and processing. May act as a scaffold protein that recruits MAP1LC3A, GABARAP and GABARAPL2 and brings them to the autophagosome membrane by interacting with VMP1 where, in cooperation with the BECN1-PI3-kinase class III complex, they trigger autophagosome development. Acts as a transcriptional activator of THRA. The sequence is that of Tumor protein p53-inducible nuclear protein 2 (Tp53inp2) from Rattus norvegicus (Rat).